The following is a 358-amino-acid chain: Peptide chain release factor 1 (358 aa).

The residue at position 233 (glutamine 233) is an N5-methylglutamine.

It belongs to the prokaryotic/mitochondrial release factor family. In terms of processing, methylated by PrmC. Methylation increases the termination efficiency of RF1.

It localises to the cytoplasm. In terms of biological role, peptide chain release factor 1 directs the termination of translation in response to the peptide chain termination codons UAG and UAA. The chain is Peptide chain release factor 1 from Clostridium botulinum (strain ATCC 19397 / Type A).